Here is a 380-residue protein sequence, read N- to C-terminus: QRFP-like peptide receptor (380 aa).

At 1 to 51 (MMLGNMTFTQTILHELLRQHNMTKNEFIERFGLPPLVYVPELSPGAKTVTL) the chain is on the extracellular side. Residues asparagine 5 and asparagine 21 are each glycosylated (N-linked (GlcNAc...) asparagine). The chain crosses the membrane as a helical span at residues 52-72 (VFYVIIFLAALLGNTLVVVVV). Topologically, residues 73-83 (WKNKVMRTTMN) are cytoplasmic. Residues 84 to 104 (IFICSLAASDLLITIVCIPVT) form a helical membrane-spanning segment. Topologically, residues 105-122 (LMQNMLQNWIMGDFMCKL) are extracellular. Cysteine 120 and cysteine 203 are disulfide-bonded. The chain crosses the membrane as a helical span at residues 123–143 (VPFIQTIAVASSILTLTGIAI). Over 144 to 164 (ERYYAIIHPLKVKYLLSKTRA) the chain is Cytoplasmic. Residues 165 to 185 (GIILALVWVVSVGVATPMLFV) form a helical membrane-spanning segment. At 186-216 (HKAEEIHDFLYEQRFVTCQEKWWGQTQQTSY) the chain is on the extracellular side. Residues 217–237 (TIFNLVVLFIIPLLTMTSLYI) traverse the membrane as a helical segment. Residues 238–269 (RIAHRLWVQQPVGVTGNFAHGNSVRRKRQAVK) are Cytoplasmic-facing. The chain crosses the membrane as a helical span at residues 270–290 (MLVVVVLLFAVCWLPYHTVTV). Residues 291-305 (MNELTGLRLEEKSAK) lie on the Extracellular side of the membrane. The helical transmembrane segment at 306 to 326 (LLIAIVQLIAFSNSFNNPVVY) threads the bilayer. The Cytoplasmic segment spans residues 327-380 (AILNENFKKNFMTMLRCRVNRVSPQQVTPNTLQTPLEQSTRSCRLPAGAPNQQI).

Belongs to the G-protein coupled receptor 1 family.

It localises to the cell membrane. Receptor for QRFP-like peptide. The activity of this receptor is mediated by G proteins which activate a phosphatidyl-inositol-calcium second messenger system. In Branchiostoma floridae (Florida lancelet), this protein is QRFP-like peptide receptor.